Here is a 324-residue protein sequence, read N- to C-terminus: NADH-ubiquinone oxidoreductase chain 1 (324 aa).

8 helical membrane passes run 9 to 29 (LINPLAYIVPVLLAVAFLTLL), 76 to 96 (LFLVTPMLALTLAMTLWAPMP), 106 to 126 (LGVLFILALSSLAVYSILGSG), 146 to 166 (ISYEVSLGLILRSIIIFWGGY), 177 to 197 (ALWLLLPACPLAAMWYISTLA), 228 to 248 (LLFLAEYANILLMNTLSAILF), 259 to 279 (ELTTINLMTKAALLSVVFLWV), and 299 to 319 (FLPLTLALVLWHTALPIAFAG).

This sequence belongs to the complex I subunit 1 family.

The protein localises to the mitochondrion inner membrane. It catalyses the reaction a ubiquinone + NADH + 5 H(+)(in) = a ubiquinol + NAD(+) + 4 H(+)(out). Functionally, core subunit of the mitochondrial membrane respiratory chain NADH dehydrogenase (Complex I) that is believed to belong to the minimal assembly required for catalysis. Complex I functions in the transfer of electrons from NADH to the respiratory chain. The immediate electron acceptor for the enzyme is believed to be ubiquinone. This Formosania lacustris (Oriental stream loach) protein is NADH-ubiquinone oxidoreductase chain 1 (MT-ND1).